The following is a 513-amino-acid chain: ATP synthase subunit alpha (513 aa).

169–176 is a binding site for ATP; that stretch reads GDRQTGKT.

Belongs to the ATPase alpha/beta chains family. In terms of assembly, F-type ATPases have 2 components, CF(1) - the catalytic core - and CF(0) - the membrane proton channel. CF(1) has five subunits: alpha(3), beta(3), gamma(1), delta(1), epsilon(1). CF(0) has three main subunits: a(1), b(2) and c(9-12). The alpha and beta chains form an alternating ring which encloses part of the gamma chain. CF(1) is attached to CF(0) by a central stalk formed by the gamma and epsilon chains, while a peripheral stalk is formed by the delta and b chains.

The protein resides in the cell inner membrane. It catalyses the reaction ATP + H2O + 4 H(+)(in) = ADP + phosphate + 5 H(+)(out). Its function is as follows. Produces ATP from ADP in the presence of a proton gradient across the membrane. The alpha chain is a regulatory subunit. The sequence is that of ATP synthase subunit alpha from Cupriavidus metallidurans (strain ATCC 43123 / DSM 2839 / NBRC 102507 / CH34) (Ralstonia metallidurans).